Here is a 507-residue protein sequence, read N- to C-terminus: Maturase K (507 aa).

It belongs to the intron maturase 2 family. MatK subfamily.

Its subcellular location is the plastid. The protein resides in the chloroplast. Functionally, usually encoded in the trnK tRNA gene intron. Probably assists in splicing its own and other chloroplast group II introns. The protein is Maturase K of Umbellularia californica (California bay laurel).